The following is a 437-amino-acid chain: Enolase 2 (437 aa).

Substrate contacts are provided by histidine 160 and glutamate 169. The active-site Proton donor is the glutamate 212. Mg(2+) is bound by residues aspartate 247, glutamate 296, and aspartate 321. Positions 296 and 321 each coordinate substrate. Lysine 346 acts as the Proton acceptor in catalysis. Substrate-binding positions include serine 373–serine 376 and lysine 397.

The protein belongs to the enolase family. Homodimer. The cofactor is Mg(2+).

It is found in the cytoplasm. It catalyses the reaction (2R)-2-phosphoglycerate = phosphoenolpyruvate + H2O. It participates in carbohydrate degradation; glycolysis; pyruvate from D-glyceraldehyde 3-phosphate: step 4/5. This Candida glabrata (strain ATCC 2001 / BCRC 20586 / JCM 3761 / NBRC 0622 / NRRL Y-65 / CBS 138) (Yeast) protein is Enolase 2 (ENO2).